We begin with the raw amino-acid sequence, 502 residues long: Probable cytochrome P450 554A1 (502 aa).

Residues 3–20 (LLLFIFFLILFYYSVKYY) form a helical membrane-spanning segment. Residue cysteine 448 coordinates heme.

It belongs to the cytochrome P450 family. Heme serves as cofactor.

The protein resides in the membrane. The polypeptide is Probable cytochrome P450 554A1 (cyp554A1) (Dictyostelium discoideum (Social amoeba)).